Here is a 142-residue protein sequence, read N- to C-terminus: MKTFVAKPETVKRDWYVVDATGKTLGRLATELARRLRGKHKAEYTPHVDTGDYIIVINAEKVAVTGKKETDKIYYWHTGYVGGIKDATFKEMIARRPEAVIEIAVKGMLPKGPLGRAMFRKLKVYAGNEHNHAAQQPQVLDI.

This sequence belongs to the universal ribosomal protein uL13 family. In terms of assembly, part of the 50S ribosomal subunit.

In terms of biological role, this protein is one of the early assembly proteins of the 50S ribosomal subunit, although it is not seen to bind rRNA by itself. It is important during the early stages of 50S assembly. The chain is Large ribosomal subunit protein uL13 from Glaesserella parasuis serovar 5 (strain SH0165) (Haemophilus parasuis).